Here is a 248-residue protein sequence, read N- to C-terminus: 1-(5-phosphoribosyl)-5-[(5-phosphoribosylamino)methylideneamino] imidazole-4-carboxamide isomerase (248 aa).

D8 serves as the catalytic Proton acceptor. Catalysis depends on D129, which acts as the Proton donor.

Belongs to the HisA/HisF family.

The protein localises to the cytoplasm. The enzyme catalyses 1-(5-phospho-beta-D-ribosyl)-5-[(5-phospho-beta-D-ribosylamino)methylideneamino]imidazole-4-carboxamide = 5-[(5-phospho-1-deoxy-D-ribulos-1-ylimino)methylamino]-1-(5-phospho-beta-D-ribosyl)imidazole-4-carboxamide. The protein operates within amino-acid biosynthesis; L-histidine biosynthesis; L-histidine from 5-phospho-alpha-D-ribose 1-diphosphate: step 4/9. The sequence is that of 1-(5-phosphoribosyl)-5-[(5-phosphoribosylamino)methylideneamino] imidazole-4-carboxamide isomerase from Sinorhizobium medicae (strain WSM419) (Ensifer medicae).